The following is a 149-amino-acid chain: Lipoprotein MlpF (149 aa).

The first 17 residues, 1–17 (MKIINILFCLFLLLLNS), serve as a signal peptide directing secretion. The N-palmitoyl cysteine moiety is linked to residue Cys18. Cys18 is lipidated: S-diacylglycerol cysteine. The segment at 26-58 (LKNNAQQTKSRGKRDLTQKEATPEKPKSKEELL) is disordered. Over residues 38–58 (KRDLTQKEATPEKPKSKEELL) the composition is skewed to basic and acidic residues.

Belongs to the Multicopy lipoprotein (Mlp) family.

Its subcellular location is the cell outer membrane. Its function is as follows. An outer membrane protein that may participate in pathogenesis. Some human Lyme disease patients have antibodies against this protein. The Mlp proteins probably undergo intragenic recombination, generating new alleles. The chain is Lipoprotein MlpF from Borreliella burgdorferi (strain ATCC 35210 / DSM 4680 / CIP 102532 / B31) (Borrelia burgdorferi).